A 226-amino-acid polypeptide reads, in one-letter code: Lipoprotein-releasing system ATP-binding protein LolD 1 (226 aa).

An ABC transporter domain is found at 6–226; sequence LRLDKVTRSF…TLREGKVVAA (221 aa). 42–49 lines the ATP pocket; it reads GPSGAGKS.

This sequence belongs to the ABC transporter superfamily. Lipoprotein translocase (TC 3.A.1.125) family. As to quaternary structure, the complex is composed of two ATP-binding proteins (LolD) and two transmembrane proteins (LolC and LolE).

It localises to the cell inner membrane. Part of the ABC transporter complex LolCDE involved in the translocation of mature outer membrane-directed lipoproteins, from the inner membrane to the periplasmic chaperone, LolA. Responsible for the formation of the LolA-lipoprotein complex in an ATP-dependent manner. The protein is Lipoprotein-releasing system ATP-binding protein LolD 1 of Rhodospirillum rubrum (strain ATCC 11170 / ATH 1.1.1 / DSM 467 / LMG 4362 / NCIMB 8255 / S1).